An 833-amino-acid chain; its full sequence is Ventricular zone-expressed PH domain-containing protein homolog 1 (833 aa).

The interaction with TGFBR1 stretch occupies residues 201–319; that stretch reads TELLALMSQL…TYLVSQLANM (119 aa). The tract at residues 458–505 is disordered; sequence KGVGSDDGEDENRGDIPASISLSEIDPLGQGNDKLPFKTDTERSQLGE. Positions 492 to 502 are enriched in basic and acidic residues; it reads LPFKTDTERSQ. The tract at residues 663-833 is interaction with TGFBR1; sequence ESTFPQQKDL…RESREVTTYL (171 aa). Residues 716–819 enclose the PH domain; it reads QPLIEGKLKE…WLQCINVAVA (104 aa).

This sequence belongs to the MELT/VEPH family. In terms of assembly, interacts with TGFBR1.

Its subcellular location is the cell membrane. In terms of biological role, interacts with TGF-beta receptor type-1 (TGFBR1) and inhibits dissociation of activated SMAD2 from TGFBR1, impeding its nuclear accumulation and resulting in impaired TGF-beta signaling. May also affect FOXO, Hippo and Wnt signaling. The chain is Ventricular zone-expressed PH domain-containing protein homolog 1 (VEPH1) from Homo sapiens (Human).